The following is a 487-amino-acid chain: Probable cytochrome P450 313a5 (487 aa).

A Phosphotyrosine modification is found at tyrosine 223. Cysteine 433 serves as a coordination point for heme.

This sequence belongs to the cytochrome P450 family. Heme is required as a cofactor.

The protein localises to the endoplasmic reticulum membrane. The protein resides in the microsome membrane. Its function is as follows. May be involved in the metabolism of insect hormones and in the breakdown of synthetic insecticides. This is Probable cytochrome P450 313a5 (Cyp313a5) from Drosophila melanogaster (Fruit fly).